Reading from the N-terminus, the 524-residue chain is Cytochrome P450 1A1 (524 aa).

Residues 33-44 (TRTWVPKGLKSP) form a mitochondrial targeting signal region. An O-linked (GlcNAc) serine glycan is attached at S71. F228 contributes to the substrate binding site. C461 contacts heme.

Belongs to the cytochrome P450 family. As to quaternary structure, both Cytochrome P450MT2A and Cytochrome P450MT2B interact with cytosolic chaperones HSP70 and HSP90; this interaction is required for initial targeting to mitochondria. P450MT2B interacts (via mitochondrial targeting signal) with TOMM40 (via N-terminus); this interaction is required for translocation across the mitochondrial outer membrane. Heme is required as a cofactor. In terms of processing, two forms; MT2A (long form) and MT2B (short form); are produced by NH2-terminal proteolytic cleavage. This cleavage activates a cryptic mitochondrial targeting signal. In terms of tissue distribution, liver.

Its subcellular location is the cytoplasm. It localises to the endoplasmic reticulum membrane. The protein localises to the mitochondrion inner membrane. It is found in the microsome membrane. It catalyses the reaction an organic molecule + reduced [NADPH--hemoprotein reductase] + O2 = an alcohol + oxidized [NADPH--hemoprotein reductase] + H2O + H(+). The catalysed reaction is estrone + reduced [NADPH--hemoprotein reductase] + O2 = 2-hydroxyestrone + oxidized [NADPH--hemoprotein reductase] + H2O + H(+). It carries out the reaction estrone + reduced [NADPH--hemoprotein reductase] + O2 = 4-hydroxyestrone + oxidized [NADPH--hemoprotein reductase] + H2O + H(+). The enzyme catalyses estrone + reduced [NADPH--hemoprotein reductase] + O2 = 6alpha-hydroxyestrone + oxidized [NADPH--hemoprotein reductase] + H2O + H(+). It catalyses the reaction estrone + reduced [NADPH--hemoprotein reductase] + O2 = 15alpha-hydroxyestrone + oxidized [NADPH--hemoprotein reductase] + H2O + H(+). The catalysed reaction is estrone + reduced [NADPH--hemoprotein reductase] + O2 = 16alpha-hydroxyestrone + oxidized [NADPH--hemoprotein reductase] + H2O + H(+). It carries out the reaction 17beta-estradiol + reduced [NADPH--hemoprotein reductase] + O2 = 2-hydroxy-17beta-estradiol + oxidized [NADPH--hemoprotein reductase] + H2O + H(+). The enzyme catalyses 17beta-estradiol + reduced [NADPH--hemoprotein reductase] + O2 = 4-hydroxy-17beta-estradiol + oxidized [NADPH--hemoprotein reductase] + H2O + H(+). It catalyses the reaction 17beta-estradiol + reduced [NADPH--hemoprotein reductase] + O2 = 6alpha-hydroxy-17beta-estradiol + oxidized [NADPH--hemoprotein reductase] + H2O + H(+). The catalysed reaction is 17beta-estradiol + reduced [NADPH--hemoprotein reductase] + O2 = 7alpha-hydroxy-17beta-estradiol + oxidized [NADPH--hemoprotein reductase] + H2O + H(+). It carries out the reaction 17beta-estradiol + reduced [NADPH--hemoprotein reductase] + O2 = 15alpha-hydroxy-17beta-estradiol + oxidized [NADPH--hemoprotein reductase] + H2O + H(+). The enzyme catalyses (5Z,8Z,11Z)-eicosatrienoate + reduced [NADPH--hemoprotein reductase] + O2 = 19-hydroxy-(5Z,8Z,11Z)-eicosatrienoate + oxidized [NADPH--hemoprotein reductase] + H2O + H(+). It catalyses the reaction (5Z,8Z,11Z,14Z)-eicosatetraenoate + reduced [NADPH--hemoprotein reductase] + O2 = 16-hydroxy-(5Z,8Z,11Z,14Z)-eicosatetraenoate + oxidized [NADPH--hemoprotein reductase] + H2O + H(+). The catalysed reaction is (5Z,8Z,11Z,14Z)-eicosatetraenoate + reduced [NADPH--hemoprotein reductase] + O2 = 17-hydroxy-(5Z,8Z,11Z,14Z)-eicosatetraenoate + oxidized [NADPH--hemoprotein reductase] + H2O + H(+). It carries out the reaction (5Z,8Z,11Z,14Z)-eicosatetraenoate + reduced [NADPH--hemoprotein reductase] + O2 = 18-hydroxy-(5Z,8Z,11Z,14Z)-eicosatetraenoate + oxidized [NADPH--hemoprotein reductase] + H2O + H(+). The enzyme catalyses (5Z,8Z,11Z,14Z)-eicosatetraenoate + reduced [NADPH--hemoprotein reductase] + O2 = 19-hydroxy-(5Z,8Z,11Z,14Z)-eicosatetraenoate + oxidized [NADPH--hemoprotein reductase] + H2O + H(+). It catalyses the reaction (5Z,8Z,11Z,14Z,17Z)-eicosapentaenoate + reduced [NADPH--hemoprotein reductase] + O2 = 19-hydroxy-(5Z,8Z,11Z,14Z,17Z)-eicosapentaenoate + oxidized [NADPH--hemoprotein reductase] + H2O + H(+). The catalysed reaction is (5Z,8Z,11Z,14Z)-eicosatetraenoate + reduced [NADPH--hemoprotein reductase] + O2 = (8R,9S)-epoxy-(5Z,11Z,14Z)-eicosatrienoate + oxidized [NADPH--hemoprotein reductase] + H2O + H(+). It carries out the reaction (5Z,8Z,11Z,14Z)-eicosatetraenoate + reduced [NADPH--hemoprotein reductase] + O2 = (11R,12S)-epoxy-(5Z,8Z,14Z)-eicosatrienoate + oxidized [NADPH--hemoprotein reductase] + H2O + H(+). The enzyme catalyses (5Z,8Z,11Z,14Z)-eicosatetraenoate + reduced [NADPH--hemoprotein reductase] + O2 = (11S,12R)-epoxy-(5Z,8Z,14Z)-eicosatrienoate + oxidized [NADPH--hemoprotein reductase] + H2O + H(+). It catalyses the reaction (5Z,8Z,11Z,14Z)-eicosatetraenoate + reduced [NADPH--hemoprotein reductase] + O2 = (14R,15S)-epoxy-(5Z,8Z,11Z)-eicosatrienoate + oxidized [NADPH--hemoprotein reductase] + H2O + H(+). The catalysed reaction is (5Z,8Z,11Z,14Z,17Z)-eicosapentaenoate + reduced [NADPH--hemoprotein reductase] + O2 = (17R,18S)-epoxy-(5Z,8Z,11Z,14Z)-eicosatetraenoate + oxidized [NADPH--hemoprotein reductase] + H2O + H(+). It carries out the reaction (4Z,7Z,10Z,13Z,16Z,19Z)-docosahexaenoate + reduced [NADPH--hemoprotein reductase] + O2 = (19S,20R)-epoxy-(4Z,7Z,10Z,13Z,16Z)-docosapentaenoate + oxidized [NADPH--hemoprotein reductase] + H2O + H(+). The enzyme catalyses (4Z,7Z,10Z,13Z,16Z,19Z)-docosahexaenoate + reduced [NADPH--hemoprotein reductase] + O2 = (19R,20S)-epoxy-(4Z,7Z,10Z,13Z,16Z)-docosapentaenoate + oxidized [NADPH--hemoprotein reductase] + H2O + H(+). It catalyses the reaction all-trans-retinol + reduced [NADPH--hemoprotein reductase] + O2 = all-trans-retinal + oxidized [NADPH--hemoprotein reductase] + 2 H2O + H(+). The catalysed reaction is all-trans-retinal + reduced [NADPH--hemoprotein reductase] + O2 = all-trans-retinoate + oxidized [NADPH--hemoprotein reductase] + H2O + 2 H(+). It carries out the reaction (13S)-hydroperoxy-(9Z,11E)-octadecadienoate = 13-oxo-(9Z,11E)-octadecadienoate + H2O. The enzyme catalyses (12S)-hydroperoxy-(5Z,8Z,10E,14Z)-eicosatetraenoate = 12-oxo-(5Z,8Z,10E,14Z)-eicosatetraenoate + H2O. It catalyses the reaction (15S)-hydroperoxy-(5Z,8Z,11Z,13E)-eicosatetraenoate = 15-oxo-(5Z,8Z,11Z,13E)-eicosatetraenoate + H2O. The catalysed reaction is (5S)-hydroperoxy-(6E,8Z,11Z,14Z)-eicosatetraenoate = 5-oxo-(6E,8Z,11Z,14Z)-eicosatetraenoate + H2O. It participates in steroid hormone biosynthesis. Its pathway is lipid metabolism; fatty acid metabolism. The protein operates within cofactor metabolism; retinol metabolism. Its function is as follows. A cytochrome P450 monooxygenase involved in the metabolism of various endogenous substrates, including fatty acids, steroid hormones and vitamins. Mechanistically, uses molecular oxygen inserting one oxygen atom into a substrate, and reducing the second into a water molecule, with two electrons provided by NADPH via cytochrome P450 reductase (CPR; NADPH-ferrihemoprotein reductase). Catalyzes the hydroxylation of carbon-hydrogen bonds. Exhibits high catalytic activity for the formation of hydroxyestrogens from estrone (E1) and 17beta-estradiol (E2), namely 2-hydroxy E1 and E2, as well as D-ring hydroxylated E1 and E2 at the C15alpha and C16alpha positions. Displays different regioselectivities for polyunsaturated fatty acids (PUFA) hydroxylation. Catalyzes the epoxidation of double bonds of certain PUFA. Converts arachidonic acid toward epoxyeicosatrienoic acid (EET) regioisomers, 8,9-, 11,12-, and 14,15-EET, that function as lipid mediators in the vascular system. Displays an absolute stereoselectivity in the epoxidation of eicosapentaenoic acid (EPA) producing the 17(R),18(S) enantiomer. May play an important role in all-trans retinoic acid biosynthesis in extrahepatic tissues. Catalyzes two successive oxidative transformation of all-trans retinol to all-trans retinal and then to the active form all-trans retinoic acid. May also participate in eicosanoids metabolism by converting hydroperoxide species into oxo metabolites (lipoxygenase-like reaction, NADPH-independent). This is Cytochrome P450 1A1 from Rattus norvegicus (Rat).